The following is a 475-amino-acid chain: MSSLLKTDFNVSKYRLIAQKREANAVEIEAALEVVREFIIKKKLILYGGIAIDYALHLKGSSIYPEGERPDFDMFSPNHVEDAYELADILYEKGFKQVGTVRAIHVQTMRVRTDFVWVADLSYMPPNIFNTIPTLTYKNLKIIHPDYQRAGLHLAFCFPFDNPPREDVFSRFKKDLQRYNLIEKYYPIPVVPVKSIYESKTFSIPFKQVAIHGFAAYALLYQTLNELRITCKVPEWKTEFPQPSYSYHKNDKNITLTVDMPKAYPALVLATYNPEEVIKEMGLHLTEICEPYMDYSPPIFKTNDIHFFSTMFKELAISIIQDNLIVVSPQYLLLYFLYGAFATPADKSLFLFYYNATLWILEKADSLLNIIQKQTSPEEFTRFANTSPFVLTTRVLSCSQERCTFSPAYRISLANDVQQSQLPLPKTHFLSNSLPDVSTLPYNYYPGKGKDRPTNFSYEKNLLFNIGGKCTPSAM.

The protein belongs to the poxviridae poly(A) polymerase catalytic subunit family. Highly divergent.

The protein resides in the virion. It catalyses the reaction RNA(n) + ATP = RNA(n)-3'-adenine ribonucleotide + diphosphate. In terms of biological role, polymerase that creates the 3'-poly(A) tail of mRNA's. This Ornithodoros (relapsing fever ticks) protein is Putative poly(A) polymerase catalytic subunit.